Consider the following 672-residue polypeptide: UvrABC system protein B (672 aa).

A Helicase ATP-binding domain is found at 26 to 181 (AGLEDGLAYQ…ILQRLAELQY (156 aa)). 39–46 (GVTGSGKT) contacts ATP. A Beta-hairpin motif is present at residues 92-115 (YYDYYQPEAYVPSSDTYIEKDASI). Residues 430-592 (QVDDLLSEIK…ITPKSIQKAV (163 aa)) enclose the Helicase C-terminal domain. In terms of domain architecture, UVR spans 631–666 (AKELRKLEEQMYHHARNLEFEEAAAVRDKIQHIRKG).

The protein belongs to the UvrB family. Forms a heterotetramer with UvrA during the search for lesions. Interacts with UvrC in an incision complex.

It localises to the cytoplasm. Functionally, the UvrABC repair system catalyzes the recognition and processing of DNA lesions. A damage recognition complex composed of 2 UvrA and 2 UvrB subunits scans DNA for abnormalities. Upon binding of the UvrA(2)B(2) complex to a putative damaged site, the DNA wraps around one UvrB monomer. DNA wrap is dependent on ATP binding by UvrB and probably causes local melting of the DNA helix, facilitating insertion of UvrB beta-hairpin between the DNA strands. Then UvrB probes one DNA strand for the presence of a lesion. If a lesion is found the UvrA subunits dissociate and the UvrB-DNA preincision complex is formed. This complex is subsequently bound by UvrC and the second UvrB is released. If no lesion is found, the DNA wraps around the other UvrB subunit that will check the other stand for damage. This Coxiella burnetii (strain CbuG_Q212) (Coxiella burnetii (strain Q212)) protein is UvrABC system protein B.